Reading from the N-terminus, the 291-residue chain is Putative GATA transcription factor 13 (291 aa).

A GATA-type zinc finger spans residues 187–241; that stretch reads KSRRLKCTHCETTTTPQWREGPNGRKTLCNACGIRFRSGRLVLEYRPAASPTFIP. Residues 271–291 form a disordered region; sequence TSGPETRSRLRNFGRPMSYGQ.

It belongs to the type IV zinc-finger family. Class A subfamily.

It is found in the nucleus. Functionally, transcriptional activator that specifically binds 5'-GATA-3' or 5'-GAT-3' motifs within gene promoters. May be involved in the regulation of some light-responsive genes. This chain is Putative GATA transcription factor 13 (GATA13), found in Arabidopsis thaliana (Mouse-ear cress).